A 75-amino-acid chain; its full sequence is Small ribosomal subunit protein bS18 (75 aa).

The protein belongs to the bacterial ribosomal protein bS18 family. Part of the 30S ribosomal subunit. Forms a tight heterodimer with protein bS6.

Binds as a heterodimer with protein bS6 to the central domain of the 16S rRNA, where it helps stabilize the platform of the 30S subunit. The polypeptide is Small ribosomal subunit protein bS18 (Legionella pneumophila (strain Paris)).